The following is a 150-amino-acid chain: Large ribosomal subunit protein uL15 (150 aa).

The segment covering 1 to 15 has biased composition (polar residues); it reads MNLSNLQPAEGSTHN. Positions 1-52 are disordered; it reads MNLSNLQPAEGSTHNQNKRLGRGEGSGKGGTSARGHKGAKSRSGYSKKIGFE. Residues 23-32 show a composition bias toward gly residues; it reads GEGSGKGGTS.

This sequence belongs to the universal ribosomal protein uL15 family. In terms of assembly, part of the 50S ribosomal subunit.

In terms of biological role, binds to the 23S rRNA. The polypeptide is Large ribosomal subunit protein uL15 (Flavobacterium psychrophilum (strain ATCC 49511 / DSM 21280 / CIP 103535 / JIP02/86)).